Consider the following 743-residue polypeptide: UvrABC system protein C (743 aa).

The GIY-YIG domain occupies valine 16–valine 95. The 36-residue stretch at aspartate 208–alanine 243 folds into the UVR domain. 2 disordered regions span residues alanine 497–arginine 543 and proline 694–glutamate 743. Residues glutamine 506–glycine 520 are compositionally biased toward acidic residues. The span at glutamine 734–glutamate 743 shows a compositional bias: polar residues.

This sequence belongs to the UvrC family. Interacts with UvrB in an incision complex.

The protein resides in the cytoplasm. In terms of biological role, the UvrABC repair system catalyzes the recognition and processing of DNA lesions. UvrC both incises the 5' and 3' sides of the lesion. The N-terminal half is responsible for the 3' incision and the C-terminal half is responsible for the 5' incision. The polypeptide is UvrABC system protein C (Rhodococcus opacus (strain B4)).